The primary structure comprises 169 residues: Cell division inhibitor SulA (169 aa).

Over residues M1 to A15 the composition is skewed to polar residues. A disordered region spans residues M1–H22. Residues A106 to Y112 are ftsZ binding. The tract at residues K162–H169 is lon protease binding.

Belongs to the SulA family. As to quaternary structure, interacts with FtsZ. In terms of processing, is rapidly cleaved and degraded by the Lon protease once DNA damage is repaired.

Component of the SOS system and an inhibitor of cell division. Accumulation of SulA causes rapid cessation of cell division and the appearance of long, non-septate filaments. In the presence of GTP, binds a polymerization-competent form of FtsZ in a 1:1 ratio, thus inhibiting FtsZ polymerization and therefore preventing it from participating in the assembly of the Z ring. This mechanism prevents the premature segregation of damaged DNA to daughter cells during cell division. The sequence is that of Cell division inhibitor SulA from Klebsiella pneumoniae (strain 342).